We begin with the raw amino-acid sequence, 1354 residues long: Phosphoribosylformylglycinamidine synthase (1354 aa).

ATP-binding positions include 327 to 338, 407 to 409, and Ala714; these read GATTGTGGRLRD and SGF. Positions 715, 754, 758, and 918 each coordinate Mg(2+). ATP is bound at residue Ser920. In terms of domain architecture, Glutamine amidotransferase type-1 spans 1087–1337; sequence VAVLREEGVN…EVSPTQSESP (251 aa). The Nucleophile role is filled by Cys1180. Catalysis depends on residues His1310 and Glu1312.

In the N-terminal section; belongs to the FGAMS family.

It catalyses the reaction N(2)-formyl-N(1)-(5-phospho-beta-D-ribosyl)glycinamide + L-glutamine + ATP + H2O = 2-formamido-N(1)-(5-O-phospho-beta-D-ribosyl)acetamidine + L-glutamate + ADP + phosphate + H(+). It functions in the pathway purine metabolism; IMP biosynthesis via de novo pathway; 5-amino-1-(5-phospho-D-ribosyl)imidazole from N(2)-formyl-N(1)-(5-phospho-D-ribosyl)glycinamide: step 1/2. Its function is as follows. Phosphoribosylformylglycinamidine synthase involved in the purines biosynthetic pathway. Catalyzes the ATP-dependent conversion of formylglycinamide ribonucleotide (FGAR) and glutamine to yield formylglycinamidine ribonucleotide (FGAM) and glutamate. Because of its role in metabolisms, is involved in sleep regulation. The sequence is that of Phosphoribosylformylglycinamidine synthase from Drosophila melanogaster (Fruit fly).